A 168-amino-acid chain; its full sequence is Phosphopantetheine adenylyltransferase (168 aa).

Thr13 contacts substrate. Residues 13-14 (TF) and His21 each bind ATP. Substrate contacts are provided by Lys45, Leu78, and Arg92. Residues 93–95 (GLR), Glu103, and 128–134 (TQFISSS) each bind ATP.

Belongs to the bacterial CoaD family. In terms of assembly, homohexamer. The cofactor is Mg(2+).

The protein resides in the cytoplasm. It catalyses the reaction (R)-4'-phosphopantetheine + ATP + H(+) = 3'-dephospho-CoA + diphosphate. It participates in cofactor biosynthesis; coenzyme A biosynthesis; CoA from (R)-pantothenate: step 4/5. Its function is as follows. Reversibly transfers an adenylyl group from ATP to 4'-phosphopantetheine, yielding dephospho-CoA (dPCoA) and pyrophosphate. This chain is Phosphopantetheine adenylyltransferase, found in Wolbachia pipientis subsp. Culex pipiens (strain wPip).